The chain runs to 619 residues: ATP-dependent zinc metalloprotease FtsH 1 (619 aa).

Topologically, residues 1–8 are cytoplasmic; the sequence is MADEKRPA. Residues 9–29 traverse the membrane as a helical segment; sequence SRAWLGYLLIAVGILVLSGIV. The Periplasmic segment spans residues 30-108; that stretch reads RSRGRPLVPY…RIEAKSPQTS (79 aa). Residues 109–129 traverse the membrane as a helical segment; it reads VWMQVAIWMLPLVLINAAFFM. Residues 130–619 lie on the Cytoplasmic side of the membrane; it reads MLRRAGQGAG…KIAVGPPSAA (490 aa). ATP is bound at residue 203-210; that stretch reads GPPGTGKT. His426 lines the Zn(2+) pocket. Residue Glu427 is part of the active site. Zn(2+) contacts are provided by His430 and Asp503.

The protein in the central section; belongs to the AAA ATPase family. In the C-terminal section; belongs to the peptidase M41 family. Homohexamer. Zn(2+) serves as cofactor.

Its subcellular location is the cell inner membrane. Its function is as follows. Acts as a processive, ATP-dependent zinc metallopeptidase for both cytoplasmic and membrane proteins. Plays a role in the quality control of integral membrane proteins. The protein is ATP-dependent zinc metalloprotease FtsH 1 of Sorangium cellulosum (strain So ce56) (Polyangium cellulosum (strain So ce56)).